A 62-amino-acid chain; its full sequence is Large ribosomal subunit protein uL30 (62 aa).

The protein belongs to the universal ribosomal protein uL30 family. In terms of assembly, part of the 50S ribosomal subunit.

The chain is Large ribosomal subunit protein uL30 from Prosthecochloris aestuarii (strain DSM 271 / SK 413).